Reading from the N-terminus, the 656-residue chain is Protein terminal ear1 (656 aa).

Positions 211-283 (SLVVLSPLPG…RRLVVEFTRP (73 aa)) constitute an RRM domain. Disordered stretches follow at residues 280–408 (FTRP…WKGR) and 576–656 (LTDP…GYDD). Residues 288-299 (PRRRGYAPHQHR) show a composition bias toward basic residues. Low complexity predominate over residues 314–331 (PSQPTSSQPPASSSSSGS). Polar residues predominate over residues 346–358 (CKSSAGSDQSSKG). Low complexity-rich tracts occupy residues 377-397 (AAAA…QKGV), 585-601 (RSPA…SRAA), and 612-630 (PAPS…STHA). A compositionally biased stretch (basic and acidic residues) spans 642-656 (DIRLAGELRRLGYDD).

In terms of tissue distribution, expressed below the shoot tip down the flanks of shoot apex in an alternating pattern. Not expressed in root tips, leaves or immature ears (female inflorescences).

In terms of biological role, probable RNA-binding protein. Involved in the regulation of leaf initiation rate and shoot development. Seems to act more predominantly in the early stages of the leaf development, rather than in the later phase. The protein is Protein terminal ear1 (TE1) of Zea mays (Maize).